The following is a 580-amino-acid chain: PTS system fructose-specific EIIB'BC component (580 aa).

PTS EIIB type-2 domains follow at residues 3–100 (MKIA…QAAE) and 124–221 (KKIV…NAFA). Residues cysteine 11 and cysteine 132 each act as phosphocysteine intermediate; for EIIB activity in the active site. Phosphocysteine; by EIIA is present on residues cysteine 11 and cysteine 132. The 336-residue stretch at 244-579 (VYKHLMTGVS…KKSAQAKAVA (336 aa)) folds into the PTS EIIC type-2 domain. Transmembrane regions (helical) follow at residues 254–274 (HMLPVVVAGGLIIALSFVFGI), 292–312 (GGSAFALMIPVLAGYIAFSIA), 322–342 (IGGMLASSTGAGFLGGIVAGF), 367–387 (ILIIPFIASLFTGLVMIYVVG), 408–428 (NAILLGIVLGAMMCFDLGGPV), 448–468 (MAAIMAAGMVPALGMGLATFI), 480–500 (AGKASFVLGLCFISEGAIPFA), 507–527 (VIPACMVGGAVTGALSMLFGA), and 537–557 (FVLLIPNAISPVLLYLVAIAV).

It localises to the cell inner membrane. The enzyme catalyses D-fructose(out) + N(pros)-phospho-L-histidyl-[protein] = D-fructose 1-phosphate(in) + L-histidyl-[protein]. The phosphoenolpyruvate-dependent sugar phosphotransferase system (sugar PTS), a major carbohydrate active transport system, catalyzes the phosphorylation of incoming sugar substrates concomitantly with their translocation across the cell membrane. The enzyme II FruAB PTS system is involved in fructose transport. In Vibrio cholerae serotype O1 (strain ATCC 39315 / El Tor Inaba N16961), this protein is PTS system fructose-specific EIIB'BC component.